A 426-amino-acid chain; its full sequence is Glutamate-1-semialdehyde 2,1-aminomutase (426 aa).

An N6-(pyridoxal phosphate)lysine modification is found at lysine 265.

The protein belongs to the class-III pyridoxal-phosphate-dependent aminotransferase family. HemL subfamily. In terms of assembly, homodimer. Pyridoxal 5'-phosphate is required as a cofactor.

The protein localises to the cytoplasm. It catalyses the reaction (S)-4-amino-5-oxopentanoate = 5-aminolevulinate. It functions in the pathway porphyrin-containing compound metabolism; protoporphyrin-IX biosynthesis; 5-aminolevulinate from L-glutamyl-tRNA(Glu): step 2/2. This chain is Glutamate-1-semialdehyde 2,1-aminomutase, found in Salmonella enteritidis PT4 (strain P125109).